The following is a 568-amino-acid chain: Periplasmic trehalase (568 aa).

A signal peptide spans 1 to 38; sequence MPHAPARSGDAMSAAAPPCCTSLLGLSLSMFVAPCALA. Substrate-binding positions include Arg-169, 176 to 177, Asn-213, 222 to 224, 294 to 296, and Gly-327; these read WD, RSQ, and RPE. Active-site proton donor/acceptor residues include Asp-329 and Glu-511. Glu-526 is a binding site for substrate.

This sequence belongs to the glycosyl hydrolase 37 family.

The protein resides in the periplasm. The enzyme catalyses alpha,alpha-trehalose + H2O = alpha-D-glucose + beta-D-glucose. Provides the cells with the ability to utilize trehalose at high osmolarity by splitting it into glucose molecules that can subsequently be taken up by the phosphotransferase-mediated uptake system. This is Periplasmic trehalase from Xanthomonas campestris pv. campestris (strain 8004).